A 92-amino-acid polypeptide reads, in one-letter code: Small ribosomal subunit protein bS18c (92 aa).

Belongs to the bacterial ribosomal protein bS18 family. Part of the 30S ribosomal subunit.

It is found in the plastid. The chain is Small ribosomal subunit protein bS18c (rps18) from Epifagus virginiana (Beechdrops).